Consider the following 122-residue polypeptide: Small ribosomal subunit protein uS13 (122 aa).

Residues 96–122 (LPVHGQRTKTNARTRKGPARTVAGKKK) are disordered.

It belongs to the universal ribosomal protein uS13 family. In terms of assembly, part of the 30S ribosomal subunit. Forms a loose heterodimer with protein S19. Forms two bridges to the 50S subunit in the 70S ribosome.

Its function is as follows. Located at the top of the head of the 30S subunit, it contacts several helices of the 16S rRNA. In the 70S ribosome it contacts the 23S rRNA (bridge B1a) and protein L5 of the 50S subunit (bridge B1b), connecting the 2 subunits; these bridges are implicated in subunit movement. Contacts the tRNAs in the A and P-sites. In Geotalea daltonii (strain DSM 22248 / JCM 15807 / FRC-32) (Geobacter daltonii), this protein is Small ribosomal subunit protein uS13.